The following is a 435-amino-acid chain: Cytochrome c biogenesis protein CcsB (435 aa).

3 helical membrane-spanning segments follow: residues 11-31, 69-89, and 159-179; these read LRVA…GTAL, SDWF…CSWR, and VGPL…VWGV.

It belongs to the Ccs1/CcsB family. May interact with CcsA.

Its subcellular location is the plastid. The protein localises to the organellar chromatophore thylakoid membrane. In terms of biological role, required during biogenesis of c-type cytochromes (cytochrome c6 and cytochrome f) at the step of heme attachment. This chain is Cytochrome c biogenesis protein CcsB, found in Paulinella chromatophora.